Consider the following 152-residue polypeptide: Transcriptional regulator MraZ (152 aa).

SpoVT-AbrB domains lie at 7-54 (INSI…TMDE) and 83-126 (ASEM…SQEA).

This sequence belongs to the MraZ family. Forms oligomers.

It localises to the cytoplasm. It is found in the nucleoid. The sequence is that of Transcriptional regulator MraZ from Hydrogenovibrio crunogenus (strain DSM 25203 / XCL-2) (Thiomicrospira crunogena).